Reading from the N-terminus, the 631-residue chain is Mercuric reductase (631 aa).

2 HMA domains span residues 2–66 (KKYR…YHPG) and 81–145 (KKYR…YQPG). A metal cation contacts are provided by Cys13, Cys16, Cys92, and Cys95. Ala181, Gly201, and Thr206 together coordinate FAD. An intrachain disulfide couples Cys207 to Cys212. FAD contacts are provided by Lys216, Asp472, and Val480. Hg(2+)-binding residues include Cys628 and Cys629.

It belongs to the class-I pyridine nucleotide-disulfide oxidoreductase family. Homodimer. Requires FAD as cofactor.

It catalyses the reaction Hg + NADP(+) + H(+) = Hg(2+) + NADPH. Functionally, resistance to Hg(2+) in bacteria appears to be governed by a specialized system which includes mercuric reductase. MerA protein is responsible for volatilizing mercury as Hg(0). The protein is Mercuric reductase (merA) of Bacillus cereus.